The following is a 160-amino-acid chain: tRNA (cytidine(56)-2'-O)-methyltransferase (160 aa).

Residues L68, 94 to 98, and 112 to 119 contribute to the S-adenosyl-L-methionine site; these read GAEKV and IGNQPHSE.

This sequence belongs to the aTrm56 family. Homodimer.

The protein localises to the cytoplasm. It catalyses the reaction cytidine(56) in tRNA + S-adenosyl-L-methionine = 2'-O-methylcytidine(56) in tRNA + S-adenosyl-L-homocysteine + H(+). Its function is as follows. Specifically catalyzes the AdoMet-dependent 2'-O-ribose methylation of cytidine at position 56 in tRNAs. The protein is tRNA (cytidine(56)-2'-O)-methyltransferase of Saccharolobus solfataricus (strain ATCC 35092 / DSM 1617 / JCM 11322 / P2) (Sulfolobus solfataricus).